We begin with the raw amino-acid sequence, 298 residues long: Small ribosomal subunit protein uS2 (298 aa).

The protein belongs to the universal ribosomal protein uS2 family.

This Leifsonia xyli subsp. xyli (strain CTCB07) protein is Small ribosomal subunit protein uS2.